The sequence spans 364 residues: Medium-wave-sensitive opsin 1 (364 aa).

Residues 1–52 (MAQRWGPHALSGVQAQDAYEDSTQASLFTYTNSNNTRGPFEGPNYHIAPRWV) lie on the Extracellular side of the membrane. Residues 17 to 43 (DAYEDSTQASLFTYTNSNNTRGPFEGP) are required for 11-cis-retinal regeneration. A glycan (N-linked (GlcNAc...) asparagine) is linked at Asn-34. Residues 53 to 77 (YHLTSAWMTIVVIASIFTNGLVLVA) traverse the membrane as a helical segment. Residues 78 to 89 (TMRFKKLRHPLN) lie on the Cytoplasmic side of the membrane. The helical transmembrane segment at 90–115 (WILVNLAVADLAETVIASTISVVNQV) threads the bilayer. Residues 116–129 (YGYFVLGHPLCVVE) are Extracellular-facing. Residues Cys-126 and Cys-203 are joined by a disulfide bond. Residues 130–149 (GYTVSLCGITGLWSLAIISW) form a helical membrane-spanning segment. The Cytoplasmic segment spans residues 150–168 (ERWLVVCKPFGNVRFDAKL). The helical transmembrane segment at 169–192 (AIVGIVFSWVWSAVWTAPPIFGWS) threads the bilayer. Residues 193-218 (RYWPYGLKTSCGPDVFSGTSYPGVQS) lie on the Extracellular side of the membrane. Residues 219-246 (YMMVLMVTCCITPLSIIVLCYLHVWLAI) form a helical membrane-spanning segment. At 247–268 (RAVAKQQKESESTQKAEKEVTR) the chain is on the cytoplasmic side. A helical membrane pass occupies residues 269 to 292 (MVVVMVLAYCLCWGPYAFFACFAT). The Extracellular portion of the chain corresponds to 293–300 (ANPGYSFH). A helical membrane pass occupies residues 301-325 (PLVAALPAYFAKSATIYNPIIYVFM). Position 312 is an N6-(retinylidene)lysine (Lys-312). The Cytoplasmic segment spans residues 326–364 (NRQFRNCILQLFGKKVEDSSELSSTSRTEASSVSSVSPA).

This sequence belongs to the G-protein coupled receptor 1 family. Opsin subfamily. Monomer. Homodimer. Homotetramer. In terms of processing, O-glycosylated. Phosphorylated on some or all of the serine and threonine residues present in the C-terminal region. As to expression, expressed in cone photoreceptor cells.

It localises to the membrane. In terms of biological role, visual pigments are the light-absorbing molecules that mediate vision. They consist of an apoprotein, opsin, covalently linked to cis-retinal. May increase spectral sensitivity in dim light. In Cavia porcellus (Guinea pig), this protein is Medium-wave-sensitive opsin 1 (OPN1MW).